The primary structure comprises 179 residues: Large ribosomal subunit protein uL10 (179 aa).

It belongs to the universal ribosomal protein uL10 family. Part of the ribosomal stalk of the 50S ribosomal subunit. The N-terminus interacts with L11 and the large rRNA to form the base of the stalk. The C-terminus forms an elongated spine to which L12 dimers bind in a sequential fashion forming a multimeric L10(L12)X complex.

Forms part of the ribosomal stalk, playing a central role in the interaction of the ribosome with GTP-bound translation factors. This is Large ribosomal subunit protein uL10 from Symbiobacterium thermophilum (strain DSM 24528 / JCM 14929 / IAM 14863 / T).